The chain runs to 65 residues: Large ribosomal subunit protein uL29 (65 aa).

The protein belongs to the universal ribosomal protein uL29 family.

The chain is Large ribosomal subunit protein uL29 from Brevibacillus brevis (strain 47 / JCM 6285 / NBRC 100599).